An 801-amino-acid polypeptide reads, in one-letter code: Triacylglycerol lipase SDP1L (801 aa).

The N-linked (GlcNAc...) asparagine glycan is linked to Asn-130. 2 helical membrane-spanning segments follow: residues 232-249 (ALLL…LGVV) and 261-277 (IIAG…VVGT). In terms of domain architecture, PNPLA spans 233-436 (LLLSGGASLG…EMDLPMIQLK (204 aa)). Residues 264–268 (GSSVG) carry the GXSXG motif. Ser-266 (nucleophile) is an active-site residue. 2 N-linked (GlcNAc...) asparagine glycosylation sites follow: Asn-328 and Asn-332. Asp-423 (proton acceptor) is an active-site residue. N-linked (GlcNAc...) asparagine glycans are attached at residues Asn-605, Asn-620, Asn-649, Asn-653, Asn-708, and Asn-759. A disordered region spans residues 648-675 (SNRTSNLSHTYDAGSECDSPEAEDWTRS). The interval 750–801 (MNSEPEDSQNESEIPETPESVQLDSPEKDIIDGESSASEDGDAQANLIHDHE) is disordered. The span at 753–765 (EPEDSQNESEIPE) shows a compositional bias: acidic residues.

Highly expressed in mature pollen.

Its subcellular location is the lipid droplet. The protein localises to the membrane. The catalysed reaction is a triacylglycerol + H2O = a diacylglycerol + a fatty acid + H(+). Functionally, may be involved in the release of fatty acids from the oil body in germinating seedlings. Can hydrolyze triacylglycerols in vitro. The chain is Triacylglycerol lipase SDP1L from Arabidopsis thaliana (Mouse-ear cress).